The following is a 115-amino-acid chain: DNA-binding protein TV0008 (115 aa).

Residues 18-37 (LQRQAMQRQMAEEEEKQREI) are disordered.

The protein belongs to the PDCD5 family.

The polypeptide is DNA-binding protein TV0008 (Thermoplasma volcanium (strain ATCC 51530 / DSM 4299 / JCM 9571 / NBRC 15438 / GSS1)).